The chain runs to 1759 residues: Replicase polyprotein (1759 aa).

One can recognise a DRBM domain in the interval Asp-23–Gly-90. Residues Tyr-113–Asn-140 are a coiled coil. The 175-residue stretch at Ala-421–Gly-595 folds into the SF3 helicase domain. Position 449 to 456 (Gly-449 to Thr-456) interacts with ATP. The Peptidase C3 domain maps to Asp-950–Leu-1191. Residues His-994, Asp-1054, and Cys-1152 each act as for picornain 3C-like protease activity in the active site. One can recognise a RdRp catalytic domain in the interval Ser-1483 to Phe-1622.

In terms of processing, protein 1A might be expressed through a ribosomal skip from one codon to the next without formation of a peptide bond.

The enzyme catalyses RNA(n) + a ribonucleoside 5'-triphosphate = RNA(n+1) + diphosphate. In terms of biological role, protein 1A functions as a suppressor of RNA-mediated gene silencing, an antiviral defense mechanism of insect cells. Binds to long dsRNA and to a lesser extent, to siRNA. Its function is as follows. RNA-directed RNA polymerase replicates genomic and antigenomic RNA. In Drosophila C virus (strain EB) (DCV), this protein is Replicase polyprotein.